The chain runs to 349 residues: Protein RecA (349 aa).

69–76 lines the ATP pocket; the sequence is GPESSGKT.

It belongs to the RecA family.

The protein resides in the cytoplasm. Functionally, can catalyze the hydrolysis of ATP in the presence of single-stranded DNA, the ATP-dependent uptake of single-stranded DNA by duplex DNA, and the ATP-dependent hybridization of homologous single-stranded DNAs. It interacts with LexA causing its activation and leading to its autocatalytic cleavage. This is Protein RecA from Rippkaea orientalis (strain PCC 8801 / RF-1) (Cyanothece sp. (strain PCC 8801)).